The sequence spans 223 residues: uncharacterized protein (223 aa).

The next 7 helical transmembrane spans lie at 25–45 (TYFL…ATMA), 46–66 (IGIS…ILFF), 78–98 (LVWT…MLNF), 105–125 (GPIV…GLSA), 140–160 (FLFA…FVGS), 161–181 (TVAH…FILF), and 199–219 (ISMY…LGIM).

The protein belongs to the BI1 family.

It localises to the cell membrane. This is an uncharacterized protein from Vibrio cholerae serotype O1 (strain ATCC 39315 / El Tor Inaba N16961).